The following is a 294-amino-acid chain: MRFVIVTGLSGAGKTQATRSLEDLGYFCVDNLPPKLINKFAELCSQGDGKIDKVALVIDIRGGVFFDDLFETLNYLKENEFKYEILFLDASDEVLIKRFKESRRSHPLSPDGRVLNGIIQERSKLREIKDRADIIIDTSKYAIRDLREKMNEHYGDNIESEKQLSITVLSFGFKYGIPVDSDLVFDVRFIPNPFYIPELKQYSGNDKSVKDYVLKQEETITFVEKLQDMLEYLVPNYIKEGKRQLIISIGCTGGRHRSVAIANEIYERLNKGNYKAKIEHRDVGEDLHRGEKKL.

Residue 8-15 (GLSGAGKT) coordinates ATP. 59 to 62 (DIRG) contacts GTP.

It belongs to the RapZ-like family.

Displays ATPase and GTPase activities. This Clostridium botulinum (strain Eklund 17B / Type B) protein is Nucleotide-binding protein CLL_A3342.